Consider the following 151-residue polypeptide: MIIEKINNNVCNMDDFSNTKKHLDKILISSELLLKRVQKLYSESGFEIGVSLGSGETLKNGDILYEDENRIVYIEVLPEEVIVITPTSIKEMGIIAHNLGNRHLPAQFDEGCMILANDYLVEDLLKKEGVPYQKENRVLPKPFKHASHKHI.

Belongs to the UreE family.

It localises to the cytoplasm. Its function is as follows. Involved in urease metallocenter assembly. Binds nickel. Probably functions as a nickel donor during metallocenter assembly. The chain is Urease accessory protein UreE from Bacillus cereus (strain ATCC 10987 / NRS 248).